The primary structure comprises 284 residues: Shikimate dehydrogenase (NADP(+)) (284 aa).

Residues 20 to 22 and Ser-67 each bind shikimate; that span reads SIS. The Proton acceptor role is filled by Lys-71. Asp-83 contacts NADP(+). Shikimate-binding residues include Asn-92 and Asp-107. Residues 129–133 and Ile-227 each bind NADP(+); that span reads GAGGA. Tyr-229 is a shikimate binding site. Residue Gly-250 participates in NADP(+) binding.

The protein belongs to the shikimate dehydrogenase family. In terms of assembly, homodimer.

The enzyme catalyses shikimate + NADP(+) = 3-dehydroshikimate + NADPH + H(+). It functions in the pathway metabolic intermediate biosynthesis; chorismate biosynthesis; chorismate from D-erythrose 4-phosphate and phosphoenolpyruvate: step 4/7. Its function is as follows. Involved in the biosynthesis of the chorismate, which leads to the biosynthesis of aromatic amino acids. Catalyzes the reversible NADPH linked reduction of 3-dehydroshikimate (DHSA) to yield shikimate (SA). This is Shikimate dehydrogenase (NADP(+)) from Streptococcus pneumoniae (strain 70585).